The chain runs to 638 residues: Threonine--tRNA ligase (638 aa).

The TGS domain maps to 1–61; it reads MPIITLPDGS…NKDSKVVIIT (61 aa). The segment at 242 to 533 is catalytic; it reads DHRKLGKKHS…LIEQYEAKFP (292 aa). Residues Cys333, His384, and His510 each contribute to the Zn(2+) site.

The protein belongs to the class-II aminoacyl-tRNA synthetase family. In terms of assembly, homodimer. The cofactor is Zn(2+).

The protein localises to the cytoplasm. It carries out the reaction tRNA(Thr) + L-threonine + ATP = L-threonyl-tRNA(Thr) + AMP + diphosphate + H(+). Catalyzes the attachment of threonine to tRNA(Thr) in a two-step reaction: L-threonine is first activated by ATP to form Thr-AMP and then transferred to the acceptor end of tRNA(Thr). Also edits incorrectly charged L-seryl-tRNA(Thr). This chain is Threonine--tRNA ligase, found in Prochlorococcus marinus (strain MIT 9301).